The primary structure comprises 356 residues: Probable D-xylulose reductase A (356 aa).

Positions 45, 70, and 71 each coordinate Zn(2+). Position 180–185 (180–185 (GAGPVG)) interacts with NAD(+).

The protein belongs to the zinc-containing alcohol dehydrogenase family. Zn(2+) serves as cofactor.

It carries out the reaction xylitol + NAD(+) = D-xylulose + NADH + H(+). It functions in the pathway carbohydrate degradation; L-arabinose degradation via L-arabinitol; D-xylulose 5-phosphate from L-arabinose (fungal route): step 4/5. Xylitol dehydrogenase which catalyzes the conversion of xylitol to D-xylulose. Xylose is a major component of hemicelluloses such as xylan. Most fungi utilize D-xylose via three enzymatic reactions, xylose reductase (XR), xylitol dehydrogenase (XDH), and xylulokinase, to form xylulose 5-phosphate, which enters pentose phosphate pathway. The polypeptide is Probable D-xylulose reductase A (xdhA) (Arthroderma otae (strain ATCC MYA-4605 / CBS 113480) (Microsporum canis)).